A 1269-amino-acid chain; its full sequence is Protein flightless-1 homolog (1269 aa).

Position 1 is an N-acetylmethionine (Met-1). Positions 1–427 (MEATGVLPFV…SGPKDPMARK (427 aa)) are interaction with LRRFIP1 and LRRFIP2. LRR repeat units follow at residues 7–32 (LPFV…VKAM), 33–55 (TSLR…LAAL), 56–78 (QKLE…LSSL), 80–103 (SLRA…IFKL), 104–126 (DDLS…LENA), 127–149 (KNML…LFIN), 150–173 (LTDL…MRRL), 175–196 (HLQT…QLPA), 197–222 (MTAL…LEGL), 223–245 (SNLA…LYTL), 247–268 (SLRR…IDQW), 269–291 (VHVE…ICKL), 293–316 (KLKK…IGKL), 318–339 (NLEE…LCRC), 340–363 (PKLR…HFLT), and 365–385 (IEVL…PADR). At Lys-21 the chain carries N6-acetyllysine. Ser-406 bears the Phosphoserine mark. Ser-436 bears the Phosphoserine; by SGK3 mark. A disordered region spans residues 452-473 (VAQEKNKKQEESADARAPSGKV). Residues 453 to 465 (AQEKNKKQEESAD) show a composition bias toward basic and acidic residues. The segment at 495–827 (VGQLPGLTIW…TVSRSLEGTE (333 aa)) is interaction with ACTL6A. Gelsolin-like repeat units lie at residues 509–591 (FVPV…EEFL), 629–703 (NIKL…PEFW), and 758–831 (ELMP…AQVF). Thr-818 is modified (phosphothreonine; by SGK3). 2 positions are modified to phosphoserine: Ser-856 and Ser-860. A disordered region spans residues 951–975 (KKEDKEEKAEGKEGEEATAEAEEKQ). The span at 952-965 (KEDKEEKAEGKEGE) shows a compositional bias: basic and acidic residues. Acidic residues predominate over residues 966-975 (EATAEAEEKQ). Gelsolin-like repeat units follow at residues 1075–1143 (TDSS…PENF) and 1181–1254 (KCSD…QHAF).

As to quaternary structure, interacts with actin, ACTL6A, NCOA2 and CARM1. Interacts with LRRFIP1, LRRFIP2 and MYD88. Upon LPS stimulation, LRRFIP2 competes for MYD88-binding. LRRFIP1 constitutively blocks the interaction with MyD88, even in the absence of LPS. Interacts with the nuclear receptors ESR1 and THRB. Interacts with SGK3. Interacts (via the gelsolin-like region) with TMOD1. Interacts with (via the gelsolin-like region) TMOD3. Interacts with LMOD2, VCL, GSN and DES. Strongest expression in skeletal muscle with high expression also in the heart and lung.

It localises to the nucleus. The protein localises to the cytoplasm. It is found in the cytoskeleton. Its subcellular location is the microtubule organizing center. The protein resides in the centrosome. It localises to the cell projection. The protein localises to the podosome. It is found in the cell junction. Its subcellular location is the focal adhesion. In terms of biological role, is a regulator of actin polymerization, required for proper myofibril organization and regulation of the length of sarcomeric thin filaments. It also plays a role in the assembly of cardiomyocyte cell adhesion complexes. Regulates cytoskeletal rearrangements involved in cytokinesis and cell migration, by inhibiting Rac1-dependent paxillin phosphorylation. May play a role as coactivator in transcriptional activation by hormone-activated nuclear receptors (NR) and acts in cooperation with NCOA2 and CARM1. Involved in estrogen hormone signaling. This chain is Protein flightless-1 homolog (FLII), found in Homo sapiens (Human).